Reading from the N-terminus, the 420-residue chain is Dynein axonemal assembly factor 4 (420 aa).

Residues 3–87 (LQVSDYSWQQ…KEAAMWETLS (85 aa)) form the CS domain. Residues 7–103 (DYSWQQTKTA…EMMQRIREKS (97 aa)) form a mediates interaction with ESR1 and STUB1 region. TPR repeat units lie at residues 290–323 (PEWLKDKGNKLFATENYLAAINAYNLAIRLNNKM), 324–357 (PLLYLNRAACHLKLKNLHKAIEDSSKALELLMPP), and 366–399 (MKAHVRRGTAFCQLELYVEGLQDYEAALKIDPSN).

As to quaternary structure, interacts with ZMYND10. Interacts with STUB1. Interacts with ESR1 and ESR2. Interacts with DNAAF2. Interacts with CCT3, CCT4, CCT5 and CCT8. Interacts with DNAAF6/PIH1D3.

The protein resides in the nucleus. It is found in the cytoplasm. The protein localises to the cell projection. Its subcellular location is the neuron projection. It localises to the dynein axonemal particle. Its function is as follows. Involved in neuronal migration during development of the cerebral neocortex. May regulate the stability and proteasomal degradation of the estrogen receptors that play an important role in neuronal differentiation, survival and plasticity. Axonemal dynein assembly factor required for ciliary motility. In Pan troglodytes (Chimpanzee), this protein is Dynein axonemal assembly factor 4.